A 438-amino-acid polypeptide reads, in one-letter code: Glycogen synthase (438 aa).

K16 is a binding site for ADP-alpha-D-glucose.

Belongs to the glycosyltransferase 1 family. Bacterial/plant glycogen synthase subfamily.

The catalysed reaction is [(1-&gt;4)-alpha-D-glucosyl](n) + ADP-alpha-D-glucose = [(1-&gt;4)-alpha-D-glucosyl](n+1) + ADP + H(+). The protein operates within glycan biosynthesis; glycogen biosynthesis. Its function is as follows. Synthesizes alpha-1,4-glucan chains using ADP-glucose. In Thermus caldophilus, this protein is Glycogen synthase.